A 485-amino-acid chain; its full sequence is CUGBP Elav-like family member 5 (485 aa).

The segment covering 1 to 11 (MARLTESEARR) has biased composition (basic and acidic residues). The tract at residues 1 to 40 (MARLTESEARRQQQQLLQPRPSPVGSSGPEPPGGQPDGMK) is disordered. The segment covering 12–28 (QQQQLLQPRPSPVGSSG) has biased composition (low complexity). RRM domains are found at residues 45 to 126 (IKLF…PADS), 134 to 214 (RKLF…FADT), and 400 to 478 (CNLF…LKRP).

The protein belongs to the CELF/BRUNOL family. As to expression, expressed in brain.

It localises to the nucleus. Its subcellular location is the cytoplasm. In terms of biological role, RNA-binding protein implicated in the regulation of pre-mRNA alternative splicing. Mediates exon inclusion and/or exclusion in pre-mRNA that are subject to tissue-specific and developmentally regulated alternative splicing. Specifically activates exon 5 inclusion of cardiac isoforms of TNNT2 during heart remodeling at the juvenile to adult transition. Binds to muscle-specific splicing enhancer (MSE) intronic sites flanking the alternative exon 5 of TNNT2 pre-mRNA. This Homo sapiens (Human) protein is CUGBP Elav-like family member 5 (CELF5).